The sequence spans 74 residues: Small ribosomal subunit protein uS8c (74 aa).

The protein belongs to the universal ribosomal protein uS8 family. In terms of assembly, part of the 30S ribosomal subunit.

Its subcellular location is the plastid. It localises to the chloroplast. In terms of biological role, one of the primary rRNA binding proteins, it binds directly to 16S rRNA central domain where it helps coordinate assembly of the platform of the 30S subunit. In Oenothera ammophila (Evening primerose), this protein is Small ribosomal subunit protein uS8c (rps8).